Consider the following 489-residue polypeptide: Ecdysteroid UDP-glucosyltransferase (489 aa).

The signal sequence occupies residues 1–17 (MVFLIIALTLLATGARA).

Belongs to the UDP-glycosyltransferase family.

In terms of biological role, catalyzes the transfer of glucose from UDP-glucose to ecdysteroids which are insect molting hormones. Expression of egt interferes with normal insect development and block molting. The protein is Ecdysteroid UDP-glucosyltransferase (EGT) of Orgyia pseudotsugata (Douglas-fir tussock moth).